Here is a 338-residue protein sequence, read N- to C-terminus: Anthranilate phosphoribosyltransferase (338 aa).

5-phospho-alpha-D-ribose 1-diphosphate-binding positions include glycine 83, 86–87 (GD), serine 91, 93–96 (NCST), 111–119 (KHGNRAVSS), and alanine 123. An anthranilate-binding site is contributed by glycine 83. Serine 95 is a binding site for Mg(2+). An anthranilate-binding site is contributed by asparagine 114. Arginine 169 contacts anthranilate. Mg(2+) contacts are provided by aspartate 228 and glutamate 229.

It belongs to the anthranilate phosphoribosyltransferase family. Homodimer. The cofactor is Mg(2+).

The catalysed reaction is N-(5-phospho-beta-D-ribosyl)anthranilate + diphosphate = 5-phospho-alpha-D-ribose 1-diphosphate + anthranilate. The protein operates within amino-acid biosynthesis; L-tryptophan biosynthesis; L-tryptophan from chorismate: step 2/5. Catalyzes the transfer of the phosphoribosyl group of 5-phosphorylribose-1-pyrophosphate (PRPP) to anthranilate to yield N-(5'-phosphoribosyl)-anthranilate (PRA). This is Anthranilate phosphoribosyltransferase from Nitratidesulfovibrio vulgaris (strain DSM 19637 / Miyazaki F) (Desulfovibrio vulgaris).